Consider the following 208-residue polypeptide: Protein-L-isoaspartate O-methyltransferase (208 aa).

Residue serine 59 is part of the active site.

The protein belongs to the methyltransferase superfamily. L-isoaspartyl/D-aspartyl protein methyltransferase family.

It is found in the cytoplasm. The enzyme catalyses [protein]-L-isoaspartate + S-adenosyl-L-methionine = [protein]-L-isoaspartate alpha-methyl ester + S-adenosyl-L-homocysteine. In terms of biological role, catalyzes the methyl esterification of L-isoaspartyl residues in peptides and proteins that result from spontaneous decomposition of normal L-aspartyl and L-asparaginyl residues. It plays a role in the repair and/or degradation of damaged proteins. This chain is Protein-L-isoaspartate O-methyltransferase, found in Yersinia pseudotuberculosis serotype O:1b (strain IP 31758).